We begin with the raw amino-acid sequence, 781 residues long: MAP7 domain-containing protein 2 (781 aa).

Positions 1 to 32 (MERSGGNGGGGGGGGGGGGGYGGSGGGGGGAG) are enriched in gly residues. 4 disordered regions span residues 1–37 (MERS…PSEG), 50–87 (AEAA…REER), 120–567 (LEEQ…AAKQ), and 597–628 (TRKS…ANKA). Composition is skewed to basic and acidic residues over residues 71-87 (LKSD…REER) and 120-158 (LEEQ…RSLE). A coiled-coil region spans residues 73-168 (SDERQRLAKE…RTQQLELKKK (96 aa)). Positions 192 to 210 (LTLATSTPPLDTGTTTAAA) are enriched in low complexity. Composition is skewed to polar residues over residues 211–245 (ESTN…TVAI) and 257–267 (LKSSYKSSPTR). The segment covering 318-328 (RRCEPPEDISK) has biased composition (basic and acidic residues). The segment covering 329–348 (RLSSPVKSKITSKTYPQSPK) has biased composition (polar residues). Basic and acidic residues-rich tracts occupy residues 370–387 (ETPK…EKEG), 397–436 (PREE…EHSA), 453–567 (LAEK…AAKQ), and 597–613 (TRKS…DPKV).

This sequence belongs to the MAP7 family. As to quaternary structure, interacts (via N-terminus) with microtubules; facilitates microtubule stabilization. Interacts with kinesin-1 family members, KIF5A, KIF5B and KIF5C. Expressed predominantly in the glomerular layer of the olfactory bulb and Sertoli cells of the testis.

The protein localises to the cytoplasm. The protein resides in the cytoskeleton. It is found in the microtubule organizing center. Its subcellular location is the centrosome. It localises to the midbody. The protein localises to the cell projection. The protein resides in the neuron projection. It is found in the axon. Microtubule-stabilizing protein involved in the control of cell motility and neurite outgrowth. Acts as a critical cofactor for kinesin transport; in the proximal axon regulates kinesin-1 family members, KIF5A, KIF5B and KIF5C recruitment to microtubules and contributes to kinesin-1-mediated transport in the axons. The protein is MAP7 domain-containing protein 2 (Map7d2) of Mus musculus (Mouse).